The sequence spans 557 residues: DNA replication factor Cdt1 (557 aa).

The short motif at 1-25 (MAQSRVTDFYACRRPGLTTPRAKSI) is the PIP-box K+4 motif element. A disordered region spans residues 20-113 (PRAKSICLTP…VCPSPVKRTK (94 aa)). Threonine 28 is subject to Phosphothreonine; by MAPK8. The residue at position 30 (serine 30) is a Phosphoserine. The Cyclin-binding motif signature appears at 65–67 (RRL). Residues 69 to 81 (LPGLDSCPSSLPE) are compositionally biased toward low complexity. Residues 82-106 (PSSPAEPSPPADPSPPADPGSPVCP) are compositionally biased toward pro residues. Serine 107 carries the phosphoserine; by MAPK8 modification. The tract at residues 163–203 (PSTPDAKVPTEQPCVEKAPAYQRFHALAQPGLPGLVLPYKY) is interaction with GMNN. Serine 392 is modified (phosphoserine). The disordered stretch occupies residues 397–427 (RSAEPGSPGTSTPPLPATPPATPPAASPSAL). Residues 407–422 (STPPLPATPPATPPAA) are compositionally biased toward pro residues. The tract at residues 463–557 (LERLPELARV…LAHHVHAEGL (95 aa)) is interaction with LRWD1.

It belongs to the Cdt1 family. In terms of assembly, interacts with GMNN; the interaction inhibits the binding of the MCM complex to origins of replication. Interacts with MCM6. Interacts with CDC6; are mutually dependent on one another for loading MCM complexes onto chromatin. Interacts with PCNA. Interacts with LRWD1 during G1 phase and during mitosis. Interacts with NDC80 subunit of the NDC80 complex; leading to kinetochore localization. Interacts with KAT7. Interacts with ubiquitin-binding protein FAF1; the interaction is likely to promote CDT1 degradation. In terms of processing, two independent E3 ubiquitin ligase complexes, SCF(SKP2) and the DCX(DTL) complex, mediated CDT1 degradation in S phase. Ubiquitinated by the DCX(DTL) complex, in response to DNA damage, leading to its degradation. Ubiquitination by the DCX(DTL) complex is necessary to ensure proper cell cycle regulation and is PCNA-dependent: interacts with PCNA via its PIP-box, while the presence of the containing the 'K+4' motif in the PIP box, recruit the DCX(DTL) complex, leading to its degradation. Phosphorylation at Thr-28 by CDK2 targets CDT1 for ubiquitynation by SCF(SKP2) E3 ubiquitin ligase and subsequent degradation. The interaction with GMNN protects it against ubiquitination. Deubiquitinated by USP37. Ubiquitinated and degraded by the SCF(FBXO31) complex during the G2 phase to prevent re-replication. Post-translationally, phosphorylation by cyclin A-dependent kinases at Thr-28 targets CDT1 for ubiquitynation by SCF(SKP2) E3 ubiquitin ligase and subsequent degradation. Phosphorylated at Thr-28 by MAPK8/JNK1, which blocks replication licensing in response to stress. Binding to GMNN is not affected by phosphorylation.

It localises to the nucleus. The protein resides in the chromosome. It is found in the centromere. The protein localises to the kinetochore. In terms of biological role, required for both DNA replication and mitosis. DNA replication licensing factor, required for pre-replication complex assembly. Cooperates with CDC6 and the origin recognition complex (ORC) during G1 phase of the cell cycle to promote the loading of the mini-chromosome maintenance (MCM) complex onto DNA to generate pre-replication complexes (pre-RC). Required also for mitosis by promoting stable kinetochore-microtubule attachments. Potential oncogene. The polypeptide is DNA replication factor Cdt1 (Mus musculus (Mouse)).